The chain runs to 126 residues: uncharacterized protein (126 aa).

Helical transmembrane passes span 40-57 (IDKW…VSFF) and 72-94 (ILIA…ILGG).

The protein localises to the cell membrane. This is an uncharacterized protein from Pasteurella multocida (strain Pm70).